The primary structure comprises 428 residues: Spliceosome RNA helicase DDX39B (428 aa).

Over residues 1 to 19 (MAENDVDNELLDYEDDEVE) the composition is skewed to acidic residues. The tract at residues 1–31 (MAENDVDNELLDYEDDEVETAAGGDGAEAPA) is disordered. Position 2 is an N-acetylalanine (alanine 2). The residue at position 36 (lysine 36) is an N6-acetyllysine; alternate. Lysine 36 is covalently cross-linked (Glycyl lysine isopeptide (Lys-Gly) (interchain with G-Cter in SUMO2); alternate). Residues serine 38 and serine 41 each carry the phosphoserine modification. The Q motif motif lies at 45 to 73 (SGFRDFLLKPELLRAIVDCGFEHPSEVQH). Residues 76–249 (IPQAILGMDV…RKFMQDPMEI (174 aa)) enclose the Helicase ATP-binding domain. 89-96 (AKSGMGKT) serves as a coordination point for ATP. Threonine 172 is modified (phosphothreonine). A DECD box motif is present at residues 196–199 (DECD). The region spanning 261 to 422 (GLQQYYVKLK…ELPDEIDISS (162 aa)) is the Helicase C-terminal domain.

It belongs to the DEAD box helicase family. DECD subfamily. Homodimer, and heterodimer with DDX39A. DDX39B interacts with the THO subcomplex to form the THO-DDX39B complex which multimerizes into a 28-subunit tetrameric assembly. Component of the transcription/export (TREX) complex at least composed of ALYREF/THOC4, DDX39B, SARNP/CIP29, CHTOP and the THO subcomplex; in the complex interacts with THOC2. THOC1-THOC2-THOC3-DDX39B subcomplex is sufficient for the interaction with export factor NXF1-NXT1. TREX seems to have a dynamic structure involving ATP-dependent remodeling. Within the TREX complex bridges ALYREF/THOC4 and the THO subcomplex, and, in a ATP-dependent manner, ALYREF/THOC4 and SARNP/CIP29. Component of the spliceosome. Interacts directly with U2AF2. Interacts with RBM8A, RNPS1 and SRRM1, FYTTD1/UIF, THOC1, MX1 and POLDIP3. Interacts with LUZP4. Interacts with SARNP/CIP29 (via the C-terminal domain); the interaction is direct and facilitates RNA binding of DDX39B.

It is found in the nucleus. The protein resides in the nucleus speckle. It localises to the cytoplasm. The enzyme catalyses ATP + H2O = ADP + phosphate + H(+). Involved in nuclear export of spliced and unspliced mRNA. Component of the TREX complex which is thought to couple mRNA transcription, processing and nuclear export, and specifically associates with spliced mRNA and not with unspliced pre-mRNA. The TREX complex is recruited to spliced mRNAs by a transcription-independent mechanism, binds to mRNA upstream of the exon-junction complex (EJC) and is recruited in a splicing- and cap-dependent manner to a region near the 5' end of the mRNA where it functions in mRNA export to the cytoplasm via the TAP/NXF1 pathway. The THOC1-THOC2-THOC3 core complex alone is sufficient to promote ATPase activity of DDX39B; in the complex THOC2 is the only component that directly interacts with DDX39B. Associates with SARNP/CIP29, which facilitates RNA binding of DDX39B and likely plays a role in mRNA export. May undergo several rounds of ATP hydrolysis during assembly of TREX to drive subsequent loading of components such as ALYREF/THOC4 and CHTOP onto mRNA. Also associates with pre-mRNA independent of ALYREF/THOC4. Involved in the nuclear export of intronless mRNA; the ATP-bound form is proposed to recruit export adapter ALYREF/THOC4 to intronless mRNA; its ATPase activity is cooperatively stimulated by RNA and ALYREF/THOC4 and ATP hydrolysis is thought to trigger the dissociation from RNA to allow the association of ALYREF/THOC4 and the NXF1-NXT1 heterodimer. Involved in transcription elongation and genome stability. Its function is as follows. Splice factor that is required for the first ATP-dependent step in spliceosome assembly and for the interaction of U2 snRNP with the branchpoint. Has both RNA-stimulated ATP binding/hydrolysis activity and ATP-dependent RNA unwinding activity. Even with the stimulation of RNA, the ATPase activity is weak. Can only hydrolyze ATP but not other NTPs. The RNA stimulation of ATPase activity does not have a strong preference for the sequence and length of the RNA. However, ssRNA stimulates the ATPase activity much more strongly than dsRNA. Can unwind 5' or 3' overhangs or blunt end RNA duplexes in vitro. The ATPase and helicase activities are not influenced by U2AF2; the effect of ALYREF/THOC4 is reported conflictingly. This chain is Spliceosome RNA helicase DDX39B (DDX39B), found in Bos taurus (Bovine).